The chain runs to 511 residues: GMP synthase [glutamine-hydrolyzing] (511 aa).

One can recognise a Glutamine amidotransferase type-1 domain in the interval Ile-5 to Asp-195. The active-site Nucleophile is Cys-82. Residues His-169 and Glu-171 contribute to the active site. The 191-residue stretch at Trp-196 to Arg-386 folds into the GMPS ATP-PPase domain. Ser-223–Ser-229 lines the ATP pocket.

In terms of assembly, homodimer.

The enzyme catalyses XMP + L-glutamine + ATP + H2O = GMP + L-glutamate + AMP + diphosphate + 2 H(+). It participates in purine metabolism; GMP biosynthesis; GMP from XMP (L-Gln route): step 1/1. Its function is as follows. Catalyzes the synthesis of GMP from XMP. In Caldicellulosiruptor saccharolyticus (strain ATCC 43494 / DSM 8903 / Tp8T 6331), this protein is GMP synthase [glutamine-hydrolyzing].